Consider the following 360-residue polypeptide: DnaJ homolog subfamily C member 25 (360 aa).

A helical membrane pass occupies residues tryptophan 20 to valine 40. One can recognise a J domain in the interval aspartate 49 to leucine 124. 2 helical membrane-spanning segments follow: residues valine 150 to serine 170 and leucine 244 to cysteine 264.

It belongs to the DNAJC25 family.

Its subcellular location is the membrane. The chain is DnaJ homolog subfamily C member 25 (DNAJC25) from Homo sapiens (Human).